The following is a 62-amino-acid chain: Phycobilisome degradation protein NblA homolog 1 (62 aa).

The protein to Synechococcus PCC 7942 NblA and some, to chloroplast ycf18.

This is Phycobilisome degradation protein NblA homolog 1 from Synechocystis sp. (strain ATCC 27184 / PCC 6803 / Kazusa).